The following is a 23-amino-acid chain: Magainin-BM2 (23 aa).

Expressed by the skin glands.

Its subcellular location is the secreted. Antimicrobial peptide. This Xenopus boumbaensis (Mawa clawed frog) protein is Magainin-BM2.